The sequence spans 182 residues: Cbp/p300-interacting transactivator 4 (182 aa).

The disordered stretch occupies residues 22 to 129 (GPHAPRTLQP…PPPPPPALGC (108 aa)). Residues 64–89 (SPVSFQPFPVSQSPGAGSTHLQSAAT) show a composition bias toward polar residues. Residues 100–117 (AAAGGPSPLQPAPGAAAS) show a composition bias toward low complexity.

Belongs to the CITED family. In terms of assembly, interacts via its C-terminal region with the CH1 domain of CREBBP and EP300. Interacts with all TFAP2/AP-2 isoforms. Strongly expressed in heart, spleen and testis, and weakly in liver and kidney.

It is found in the nucleus. The protein localises to the cytoplasm. In terms of biological role, acts as a transcriptional coactivator for TFAP2/AP-2. Enhances estrogen-dependent transactivation mediated by estrogen receptors. May function as an inhibitor of transactivation by HIF1A by disrupting HIF1A interaction with CREBBP. May be involved in regulation of gene expression during development and differentiation of blood cells, endothelial cells and mammary epithelial cells. This chain is Cbp/p300-interacting transactivator 4, found in Mus musculus (Mouse).